The chain runs to 294 residues: Pyridoxal 5'-phosphate synthase subunit PdxS (294 aa).

Aspartate 24 serves as a coordination point for D-ribose 5-phosphate. Lysine 81 (schiff-base intermediate with D-ribose 5-phosphate) is an active-site residue. Glycine 153 serves as a coordination point for D-ribose 5-phosphate. Residue arginine 165 participates in D-glyceraldehyde 3-phosphate binding. D-ribose 5-phosphate is bound by residues glycine 214 and 235–236; that span reads GS.

This sequence belongs to the PdxS/SNZ family. In the presence of PdxT, forms a dodecamer of heterodimers.

It catalyses the reaction aldehydo-D-ribose 5-phosphate + D-glyceraldehyde 3-phosphate + L-glutamine = pyridoxal 5'-phosphate + L-glutamate + phosphate + 3 H2O + H(+). It functions in the pathway cofactor biosynthesis; pyridoxal 5'-phosphate biosynthesis. Its function is as follows. Catalyzes the formation of pyridoxal 5'-phosphate from ribose 5-phosphate (RBP), glyceraldehyde 3-phosphate (G3P) and ammonia. The ammonia is provided by the PdxT subunit. Can also use ribulose 5-phosphate and dihydroxyacetone phosphate as substrates, resulting from enzyme-catalyzed isomerization of RBP and G3P, respectively. This Bacillus pumilus (strain SAFR-032) protein is Pyridoxal 5'-phosphate synthase subunit PdxS.